Here is a 578-residue protein sequence, read N- to C-terminus: CTP synthase 2 (578 aa).

In terms of domain architecture, Glutamine amidotransferase type-1 spans 305-564 (KIALVGKYTN…VAAASGTLGD (260 aa)). Catalysis depends on for GATase activity residues Cys-404, His-537, and Glu-539.

This sequence belongs to the CTP synthase family. Homodimer. Oligomerizes to a tetramer in the presence of its substrates UTP and ATP. Mg(2+) serves as cofactor.

The protein resides in the cytoplasm. The catalysed reaction is UTP + L-glutamine + ATP + H2O = CTP + L-glutamate + ADP + phosphate + 2 H(+). It functions in the pathway pyrimidine metabolism; CTP biosynthesis via de novo pathway; CTP from UDP: step 2/2. Its activity is regulated as follows. Activated by GTP. Subject to allosteric product inhibition by CTP. Inhibited by p-chloromercuriphenylsulfonic acid, N-ethylmaleimide and cyclopentenylcytosine (CPEC). Functionally, catalyzes the ATP-dependent amination of UTP to CTP with either L-glutamine or ammonia as the source of nitrogen. Plays an important role in the regulation of phospholipid synthesis. This Saccharomyces cerevisiae (strain YJM789) (Baker's yeast) protein is CTP synthase 2 (URA8).